Here is a 472-residue protein sequence, read N- to C-terminus: Riboflavin transporter RibJ (472 aa).

Over 1 to 11 the chain is Cytoplasmic; the sequence is MLPCFTRKPVD. A helical transmembrane segment spans residues 12-32; it reads HPLGFLVALSGLLMQLMSYGI. The Extracellular portion of the chain corresponds to 33-58; that stretch reads DNSYSIFSDDMHKDPSLGYPSVTTIS. The chain crosses the membrane as a helical span at residues 59–79; it reads LGNSVSLGLSPAFGVLCGFLV. Residues 80–85 are Cytoplasmic-facing; sequence DRVPPR. A helical transmembrane segment spans residues 86 to 106; the sequence is LMMAVSTLMLFAGLWLSSTFA. Topologically, residues 107 to 108 are extracellular; that stretch reads HN. Asn-108 carries an N-linked (GlcNAc...) asparagine glycan. A helical transmembrane segment spans residues 109–129; it reads VTAVTFSYCLLASISSACMLS. At 130 to 144 the chain is on the cytoplasmic side; it reads PGAAATSSWFNRYQG. A helical membrane pass occupies residues 145–165; the sequence is LAMGINFSGGGVGSAIIPSLA. Topologically, residues 166-179 are extracellular; the sequence is GKWVVAYGWRKTFR. The chain crosses the membrane as a helical span at residues 180-196; that stretch reads LMSAFCAIGVVATLLSA. The Cytoplasmic segment spans residues 197-271; the sequence is RRAPPKKEEA…TMFSRAFLGN (75 aa). The interval 200 to 248 is disordered; it reads PPKKEEAGPSEYDEGQERQEQGEEEQAHTDEENRNNNNSNGETTPARRG. Over residues 214–233 the composition is skewed to basic and acidic residues; it reads GQERQEQGEEEQAHTDEENR. Residues 272–292 traverse the membrane as a helical segment; it reads FFCWLIFSWAFYSLIYVAVPY. Topologically, residues 293-315 are extracellular; the sequence is VSSMGKAGTVYADISPIPTDIAS. Residues 316 to 336 traverse the membrane as a helical segment; the sequence is TLFTFYGVFQIVGSILVGWLA. Over 337–341 the chain is Cytoplasmic; sequence TGTTN. A helical membrane pass occupies residues 342 to 362; sequence EFAYVLCATIGGIFCAFLGFC. Topologically, residues 363–365 are extracellular; sequence RSY. The chain crosses the membrane as a helical span at residues 366 to 386; that stretch reads VAFALLLCVIGFCMAGMFAVM. Residues 387-399 lie on the Cytoplasmic side of the membrane; sequence PALIAERLYGPNL. A helical transmembrane segment spans residues 400 to 420; it reads GFYMGAVFLAGVVGGFSAPPI. Over 421 to 434 the chain is Extracellular; the sequence is QAELQQRHYGNYTY. N-linked (GlcNAc...) asparagine glycosylation is present at Asn-431. A helical membrane pass occupies residues 435–455; the sequence is VCVFMSACMTLAAAVCYITMW. Topologically, residues 456–472 are cytoplasmic; it reads RDKRVRIVSAAAEAKLA.

The protein belongs to the major facilitator superfamily. RibJ family.

The protein localises to the cell membrane. Its function is as follows. Transporter involved in riboflavin (vitamin B2) uptake. Also transports FMN and FAD. The protein is Riboflavin transporter RibJ of Trypanosoma cruzi (strain CL Brener).